A 139-amino-acid polypeptide reads, in one-letter code: Putative pre-16S rRNA nuclease (139 aa).

Belongs to the YqgF nuclease family.

It is found in the cytoplasm. Its function is as follows. Could be a nuclease involved in processing of the 5'-end of pre-16S rRNA. The polypeptide is Putative pre-16S rRNA nuclease (Dictyoglomus thermophilum (strain ATCC 35947 / DSM 3960 / H-6-12)).